A 205-amino-acid chain; its full sequence is Small ribosomal subunit protein uS4 (205 aa).

Residues 1-16 (MSKRESSKYKIDRRMG) are compositionally biased toward basic and acidic residues. Residues 1 to 46 (MSKRESSKYKIDRRMGENIWGRPKSPVNRREYGPGQHGQRRKSKLS) are disordered. The S4 RNA-binding domain maps to 94–157 (SRLDAIVYRA…KQLVTVLEAV (64 aa)).

Belongs to the universal ribosomal protein uS4 family. Part of the 30S ribosomal subunit. Contacts protein S5. The interaction surface between S4 and S5 is involved in control of translational fidelity.

In terms of biological role, one of the primary rRNA binding proteins, it binds directly to 16S rRNA where it nucleates assembly of the body of the 30S subunit. With S5 and S12 plays an important role in translational accuracy. This Sinorhizobium medicae (strain WSM419) (Ensifer medicae) protein is Small ribosomal subunit protein uS4.